The following is a 429-amino-acid chain: Histidine--tRNA ligase (429 aa).

This sequence belongs to the class-II aminoacyl-tRNA synthetase family. In terms of assembly, homodimer.

The protein localises to the cytoplasm. The catalysed reaction is tRNA(His) + L-histidine + ATP = L-histidyl-tRNA(His) + AMP + diphosphate + H(+). The protein is Histidine--tRNA ligase of Dechloromonas aromatica (strain RCB).